The chain runs to 292 residues: Homoserine kinase (292 aa).

81–91 (RPKSGLGSSGA) contributes to the ATP binding site.

Belongs to the GHMP kinase family. Homoserine kinase subfamily.

It is found in the cytoplasm. It carries out the reaction L-homoserine + ATP = O-phospho-L-homoserine + ADP + H(+). Its pathway is amino-acid biosynthesis; L-threonine biosynthesis; L-threonine from L-aspartate: step 4/5. Functionally, catalyzes the ATP-dependent phosphorylation of L-homoserine to L-homoserine phosphate. The polypeptide is Homoserine kinase (Pyrococcus furiosus (strain ATCC 43587 / DSM 3638 / JCM 8422 / Vc1)).